Here is a 173-residue protein sequence, read N- to C-terminus: Co-chaperone protein HscB homolog (173 aa).

The J domain occupies 5-77 (CHYALFDLQP…PRRARYLLAI (73 aa)).

This sequence belongs to the HscB family. In terms of assembly, interacts with HscA and stimulates its ATPase activity.

Functionally, co-chaperone involved in the maturation of iron-sulfur cluster-containing proteins. Seems to help targeting proteins to be folded toward HscA. The chain is Co-chaperone protein HscB homolog from Pseudomonas putida (strain ATCC 700007 / DSM 6899 / JCM 31910 / BCRC 17059 / LMG 24140 / F1).